Reading from the N-terminus, the 828-residue chain is Deubiquitinase MYSM1 (828 aa).

Residues 1-12 (MAAEEADVDIEG) show a composition bias toward acidic residues. The disordered stretch occupies residues 1-31 (MAAEEADVDIEGDVVAAAGAQPGSGENTASV). A Phosphoserine modification is found at serine 110. An SANT domain is found at 116-167 (SYSVKWTIEEKELFEQGLAKFGRRWTKISKLIGSRTVLQVKSYARQYFKNKV). Residue lysine 187 forms a Glycyl lysine isopeptide (Lys-Gly) (interchain with G-Cter in SUMO2) linkage. The residue at position 218 (serine 218) is a Phosphoserine. Phosphothreonine is present on threonine 236. Phosphoserine occurs at positions 242, 267, and 340. The region spanning 372–470 (LKPPEQEIEI…FGCEQAVYNR (99 aa)) is the SWIRM domain. Residues 577–709 (VKVASEALLI…PLPYSQITCL (133 aa)) enclose the MPN domain. Zn(2+) contacts are provided by histidine 656, histidine 658, and aspartate 669. The short motif at 656 to 669 (HSHPAFDPNPSLRD) is the JAMM motif element. The short motif at 774 to 778 (LQKLL) is the LXXLL motif element.

This sequence belongs to the peptidase M67A family. MYSM1 subfamily. In terms of assembly, component of a large chromatin remodeling complex, at least composed of MYSM1, PCAF, RBM10 and KIF11/TRIP5. Binds histones. Interacts with NFIL3; this interaction is critical for their correct recruitment to the ID2 locus during natural killer cell maturation.

It localises to the nucleus. Its subcellular location is the cytoplasm. Its function is as follows. Metalloprotease with deubiquitinase activity that plays important regulator roles in hematopoietic stem cell function, blood cell production and immune response. Participates in the normal programming of B-cell responses to antigen after the maturation process. Within the cytoplasm, plays critical roles in the repression of innate immunity and autoimmunity. Removes 'Lys-63'-linked polyubiquitins from TRAF3 and TRAF6 complexes. Attenuates NOD2-mediated inflammation and tissue injury by promoting 'Lys-63'-linked deubiquitination of RIPK2 component. Suppresses the CGAS-STING1 signaling pathway by cleaving STING1 'Lys-63'-linked ubiquitin chains. In the nucleus, acts as a hematopoietic transcription regulator derepressing a range of genes essential for normal stem cell differentiation including EBF1 and PAX5 in B-cells, ID2 in NK-cell progenitor or FLT3 in dendritic cell precursors. Deubiquitinates monoubiquitinated histone H2A, a specific tag for epigenetic transcriptional repression, leading to dissociation of histone H1 from the nucleosome. The sequence is that of Deubiquitinase MYSM1 (MYSM1) from Homo sapiens (Human).